A 718-amino-acid polypeptide reads, in one-letter code: MASSAAQIHVLGGIGFASSSSSKRNLNGKGGTFMPRSAFFGTRTGPFSTPTSAFLRMGTRNGGGASRYAVGPVRVVNEKVVGIDLGTTNSAVAAMEGGKPTIVTNAEGQRTTPSVVAYTKSGDRLVGQIAKRQAVVNPENTFFSVKRFIGRKMNEVDEESKQVSYRVVRDENNNVKLECPAINKQFAAEEISAQVLRKLVDDASRFLNDKVTKAVITVPAYFNDSQRTATKDAGRIAGLEVLRIINEPTAASLAYGFDRKANETILVFDLGGGTFDVSVLEVGDGVFEVLSTSGDTHLGGDDFDKRVVDWLAAEFKKDEGIDLLKDKQALQRLTEAAEKAKIELSSLTQTNMSLPFITATADGPKHIETTLTRAKFEELCSDLLDRVRTPVENSLRDAKLSFKDIDEVILVGGSTRIPAVQELVRKVTGKEPNVTVNPDEVVALGAAVQAGVLAGDVSDIVLLDVTPLSIGLETLGGVMTKIIPRNTTLPTSKSEVFSTAADGQTSVEINVLQGEREFVRDNKSLGSFRLDGIPPAPRGVPQIEVKFDIDANGILSVSAVDKGTGKKQDITITGASTLPKDEVDQMVQEAERFAKDDKEKRDAIDTKNQADSVVYQTEKQLKELGEKIPGEVKEKVEAKLQELKDKIGSGSTQEIKDAMAALNQEVMQIGQSLYNQPGAGGPGAGPSPGGEGASSGDSSSSKGGDGDDVIDADFTDSQ.

The transit peptide at methionine 1 to valine 92 directs the protein to the chloroplast. The disordered stretch occupies residues glutamine 671 to glutamine 718. Gly residues predominate over residues glycine 678 to alanine 693. Residues glycine 706 to glutamine 718 show a composition bias toward acidic residues.

This sequence belongs to the heat shock protein 70 (TC 1.A.33) family. DnaK subfamily. In terms of assembly, interacts with geminivirus movement protein (MP).

The protein resides in the plastid. It is found in the chloroplast stroma. Its function is as follows. Acts redundantly with HSP70-7 in the thermotolerance of germinating seeds. Plays an important role in the protein precursor import into chloroplasts. Functionally, in cooperation with other chaperones, Hsp70s are key components that facilitate folding of de novo synthesized proteins, assist translocation of precursor proteins into organelles, and are responsible for degradation of damaged protein under stress conditions. The sequence is that of Heat shock 70 kDa protein 6, chloroplastic (HSP70-6) from Arabidopsis thaliana (Mouse-ear cress).